The sequence spans 462 residues: L-seryl-tRNA(Sec) selenium transferase (462 aa).

K293 is subject to N6-(pyridoxal phosphate)lysine.

It belongs to the SelA family. Pyridoxal 5'-phosphate serves as cofactor.

It localises to the cytoplasm. It catalyses the reaction L-seryl-tRNA(Sec) + selenophosphate + H(+) = L-selenocysteinyl-tRNA(Sec) + phosphate. The protein operates within aminoacyl-tRNA biosynthesis; selenocysteinyl-tRNA(Sec) biosynthesis; selenocysteinyl-tRNA(Sec) from L-seryl-tRNA(Sec) (bacterial route): step 1/1. In terms of biological role, converts seryl-tRNA(Sec) to selenocysteinyl-tRNA(Sec) required for selenoprotein biosynthesis. The chain is L-seryl-tRNA(Sec) selenium transferase from Clostridium botulinum (strain 657 / Type Ba4).